Reading from the N-terminus, the 168-residue chain is Crossover junction endodeoxyribonuclease RuvC (168 aa).

Residues Asp7, Glu66, and Asp138 contribute to the active site. Positions 7, 66, and 138 each coordinate Mg(2+).

The protein belongs to the RuvC family. Homodimer which binds Holliday junction (HJ) DNA. The HJ becomes 2-fold symmetrical on binding to RuvC with unstacked arms; it has a different conformation from HJ DNA in complex with RuvA. In the full resolvosome a probable DNA-RuvA(4)-RuvB(12)-RuvC(2) complex forms which resolves the HJ. The cofactor is Mg(2+).

It is found in the cytoplasm. The catalysed reaction is Endonucleolytic cleavage at a junction such as a reciprocal single-stranded crossover between two homologous DNA duplexes (Holliday junction).. Functionally, the RuvA-RuvB-RuvC complex processes Holliday junction (HJ) DNA during genetic recombination and DNA repair. Endonuclease that resolves HJ intermediates. Cleaves cruciform DNA by making single-stranded nicks across the HJ at symmetrical positions within the homologous arms, yielding a 5'-phosphate and a 3'-hydroxyl group; requires a central core of homology in the junction. The consensus cleavage sequence is 5'-(A/T)TT(C/G)-3'. Cleavage occurs on the 3'-side of the TT dinucleotide at the point of strand exchange. HJ branch migration catalyzed by RuvA-RuvB allows RuvC to scan DNA until it finds its consensus sequence, where it cleaves and resolves the cruciform DNA. The sequence is that of Crossover junction endodeoxyribonuclease RuvC from Cereibacter sphaeroides (strain ATCC 17023 / DSM 158 / JCM 6121 / CCUG 31486 / LMG 2827 / NBRC 12203 / NCIMB 8253 / ATH 2.4.1.) (Rhodobacter sphaeroides).